We begin with the raw amino-acid sequence, 465 residues long: 6-phospho-beta-glucosidase (465 aa).

Catalysis depends on glutamate 173, which acts as the Proton donor. Glutamate 362 (nucleophile) is an active-site residue.

Belongs to the glycosyl hydrolase 1 family.

It carries out the reaction 6-phospho-beta-D-glucosyl-(1-&gt;4)-D-glucose + H2O = D-glucose 6-phosphate + D-glucose. Its pathway is carbohydrate metabolism; beta-glucoside metabolism. In Dickeya chrysanthemi (Pectobacterium chrysanthemi), this protein is 6-phospho-beta-glucosidase (arbB).